A 311-amino-acid chain; its full sequence is uncharacterized protein (311 aa).

The next 9 membrane-spanning stretches (helical) occupy residues 11-31 (LDNW…GYLS), 34-54 (VGIV…FLSL), 72-92 (LAIS…LFGI), 101-121 (HVIV…FVAQ), 147-167 (IEGI…WYLM), 198-218 (WFGV…FALS), 233-253 (GFIA…SIVI), 257-277 (FALA…TYLL), and 279-299 (TIPF…NVGP).

It localises to the cell membrane. This is an uncharacterized protein from Mycoplasma pneumoniae (strain ATCC 29342 / M129 / Subtype 1) (Mycoplasmoides pneumoniae).